Here is a 316-residue protein sequence, read N- to C-terminus: Protoheme IX farnesyltransferase (316 aa).

A run of 9 helical transmembrane segments spans residues 32 to 52, 53 to 73, 93 to 113, 116 to 136, 152 to 172, 180 to 200, 221 to 241, 252 to 271, and 289 to 309; these read VMSL…GHIH, PVLG…SGAL, IPAG…LSGF, VILG…TIFF, NIVI…ACVT, TVLF…LALF, VTKH…VLPS, LVAA…VWRM, and IFYL…PVLV.

It belongs to the UbiA prenyltransferase family. Protoheme IX farnesyltransferase subfamily.

Its subcellular location is the cell inner membrane. The catalysed reaction is heme b + (2E,6E)-farnesyl diphosphate + H2O = Fe(II)-heme o + diphosphate. It participates in porphyrin-containing compound metabolism; heme O biosynthesis; heme O from protoheme: step 1/1. In terms of biological role, converts heme B (protoheme IX) to heme O by substitution of the vinyl group on carbon 2 of heme B porphyrin ring with a hydroxyethyl farnesyl side group. The protein is Protoheme IX farnesyltransferase of Rhizobium johnstonii (strain DSM 114642 / LMG 32736 / 3841) (Rhizobium leguminosarum bv. viciae).